The sequence spans 288 residues: Nucleotide-binding protein AHA_3920 (288 aa).

8 to 15 (GRSGSGKT) contributes to the ATP binding site. 56 to 59 (DVRN) contributes to the GTP binding site.

This sequence belongs to the RapZ-like family.

In terms of biological role, displays ATPase and GTPase activities. This chain is Nucleotide-binding protein AHA_3920, found in Aeromonas hydrophila subsp. hydrophila (strain ATCC 7966 / DSM 30187 / BCRC 13018 / CCUG 14551 / JCM 1027 / KCTC 2358 / NCIMB 9240 / NCTC 8049).